We begin with the raw amino-acid sequence, 542 residues long: 4-coumarate--CoA ligase 2 (542 aa).

ATP contacts are provided by S189, S190, G191, T192, T193, and K197. The (E)-4-coumaroyl-AMP site is built by Y239 and S243. Residues Y239 and S243 each contribute to the (E)-caffeoyl-AMP site. Positions 239 and 243 each coordinate (E)-feruloyl-AMP. K260 provides a ligand contact to CoA. The segment at 262 to 331 (DIVSFLELIQ…AKFPNAKLGQ (70 aa)) is SBD1. (E)-4-coumaroyl-AMP is bound at residue A309. A309 is a binding site for (E)-caffeoyl-AMP. A (E)-feruloyl-AMP-binding site is contributed by A309. ATP contacts are provided by Q331, G332, and T336. Residues G332, T336, M344, D420, R435, K437, and K441 each contribute to the (E)-4-coumaroyl-AMP site. G332, T336, M344, D420, R435, K437, and K441 together coordinate (E)-caffeoyl-AMP. The (E)-feruloyl-AMP site is built by G332, T336, M344, D420, R435, K437, and K441. G332 and T336 together coordinate AMP. Residues 332–399 (GYGMTEAGPV…IRGDQIMKGY (68 aa)) are SBD2. The ATP site is built by D420 and R435. D420 contributes to the AMP binding site. 2 residues coordinate AMP: K437 and K441. CoA-binding residues include K443 and G444. Q446 provides a ligand contact to AMP. An ATP-binding site is contributed by K526.

The protein belongs to the ATP-dependent AMP-binding enzyme family. The cofactor is Mg(2+). As to expression, mainly expressed in old stems and, to a lower extent, in flowers (e.g. in ovary), leaves, young stems, shoot tips and patel limbs.

It carries out the reaction (E)-4-coumarate + ATP + CoA = (E)-4-coumaroyl-CoA + AMP + diphosphate. The catalysed reaction is (E)-caffeate + ATP + CoA = (E)-caffeoyl-CoA + AMP + diphosphate. The enzyme catalyses (E)-ferulate + ATP + CoA = (E)-feruloyl-CoA + AMP + diphosphate. It catalyses the reaction (E)-cinnamate + ATP + CoA = (E)-cinnamoyl-CoA + AMP + diphosphate. It carries out the reaction (E)-4-coumarate + ATP + H(+) = (E)-4-coumaroyl-AMP + diphosphate. The catalysed reaction is (E)-4-coumaroyl-AMP + CoA = (E)-4-coumaroyl-CoA + AMP + H(+). The enzyme catalyses (E)-caffeate + ATP + H(+) = (E)-caffeoyl-AMP + diphosphate. It catalyses the reaction (E)-caffeoyl-AMP + CoA = (E)-caffeoyl-CoA + AMP + H(+). It carries out the reaction (E)-ferulate + ATP + H(+) = (E)-feruloyl-AMP + diphosphate. The catalysed reaction is (E)-feruloyl-AMP + CoA = (E)-feruloyl-CoA + AMP + H(+). It participates in phytoalexin biosynthesis; 3,4',5-trihydroxystilbene biosynthesis; 3,4',5-trihydroxystilbene from trans-4-coumarate: step 1/2. Its function is as follows. Major enzyme of the phenylpropanoid pathway that mediates the production of several precursors for numerous metabolites and regulates carbon flow. Catalyzes the formation of CoA thioesters using 4-coumarate, ferulate, caffeate, and cinnamate as substrates. Follows a two-step reaction mechanism, wherein a (hydroxy)cinnamate substrate first undergoes adenylation by ATP leading to an acyl-AMP, followed by a thioesterification in the presence of CoA to yield the final (hydroxy)cinnamoyl-CoA product. Almost inactive toward sinapate. The sequence is that of 4-coumarate--CoA ligase 2 from Nicotiana tabacum (Common tobacco).